The chain runs to 544 residues: Prolyl 4-hydroxylase subunit alpha-3 (544 aa).

The signal sequence occupies residues 1-19 (MGPAARLAALLAVLAFRAG). Residues 107–131 (LEASENIRALKDGYERVEQDLPAFE) adopt a coiled-coil conformation. Residues 227–260 (EDALDHLAFAYFQAGNVLCALNLSREFLLYSPDN) form a TPR repeat. N-linked (GlcNAc...) asparagine glycosylation occurs at Asn248. The Fe2OG dioxygenase domain maps to 422–529 (YAEYLQVVNY…KWVANKWIHE (108 aa)). The Fe cation site is built by His440 and Asp442. A glycan (N-linked (GlcNAc...) asparagine) is linked at Asn482. His510 lines the Fe cation pocket. A 2-oxoglutarate-binding site is contributed by Lys520.

Belongs to the P4HA family. In terms of assembly, heterotetramer of two alpha-3 chains and two beta chains (the beta chain is the multi-functional PDI). Fe(2+) is required as a cofactor. The cofactor is L-ascorbate. N-glycosylation plays no role in the catalytic activity.

The protein localises to the endoplasmic reticulum lumen. It carries out the reaction L-prolyl-[collagen] + 2-oxoglutarate + O2 = trans-4-hydroxy-L-prolyl-[collagen] + succinate + CO2. Its function is as follows. Catalyzes the post-translational formation of 4-hydroxyproline in -Xaa-Pro-Gly- sequences in collagens and other proteins. In Bos taurus (Bovine), this protein is Prolyl 4-hydroxylase subunit alpha-3 (P4HA3).